The following is a 311-amino-acid chain: Apulose-4-phosphate transketolase subunit B (311 aa).

Belongs to the transketolase family. Probable heterodimer composed of AptA and AptB. It depends on thiamine diphosphate as a cofactor.

The catalysed reaction is apulose 4-phosphate + D-glyceraldehyde 3-phosphate = D-xylulose 5-phosphate + dihydroxyacetone phosphate. It functions in the pathway carbohydrate metabolism. Its function is as follows. Involved in catabolism of D-apiose. Catalyzes the transfer of the glycolaldehyde group from apulose-4-phosphate to D-glyceraldehyde 3-phosphate, generating dihydroxyacetone phosphate and D-xylulose-5-phosphate. The protein is Apulose-4-phosphate transketolase subunit B of Actinobacillus succinogenes (strain ATCC 55618 / DSM 22257 / CCUG 43843 / 130Z).